The chain runs to 192 residues: Phosphomevalonate kinase (192 aa).

Residues 17 to 23 (KRKSGKD) and arginine 141 each bind ATP. A substrate-binding site is contributed by asparagine 170. 2 residues coordinate ATP: histidine 171 and glutamine 180.

Monomer.

It is found in the cytoplasm. The protein localises to the cytosol. The enzyme catalyses (R)-5-phosphomevalonate + ATP = (R)-5-diphosphomevalonate + ADP. It functions in the pathway isoprenoid biosynthesis; isopentenyl diphosphate biosynthesis via mevalonate pathway; isopentenyl diphosphate from (R)-mevalonate: step 2/3. Its function is as follows. Catalyzes the reversible ATP-dependent phosphorylation of mevalonate 5-phosphate to produce mevalonate diphosphate and ADP, a key step in the mevalonic acid mediated biosynthesis of isopentenyl diphosphate and other polyisoprenoid metabolites. The chain is Phosphomevalonate kinase (Pmvk) from Mus musculus (Mouse).